Here is a 448-residue protein sequence, read N- to C-terminus: Oxysterol-binding protein homolog 6 (448 aa).

The interval 1–42 is disordered; the sequence is MGSKKLTVGSDSHRLSKSSFSSNKSSHSATKDQPIDTDDIDE. At S16 the chain carries Phosphoserine. Low complexity predominate over residues 17–28; it reads KSSFSSNKSSHS. Residues 54–391 form an OSBP-related domain (ORD) region; it reads IISQLRPGCD…PGEDLDYCIY (338 aa). A 1,2-diacyl-sn-glycero-3-phospho-(1D-myo-inositol 4-phosphate)-binding positions include 64-69, 126-129, and 157-158; these read LTRITL, KPLN, and HH. A 1,2-diacyl-sn-glycero-3-phospho-L-serine-binding positions include 64–69 and N129; that span reads LTRITL. S183 lines the a 1,2-diacyl-sn-glycero-3-phospho-L-serine pocket. Positions 351, 355, and 359 each coordinate a 1,2-diacyl-sn-glycero-3-phospho-(1D-myo-inositol 4-phosphate).

The protein belongs to the OSBP family. As to quaternary structure, interacts with the AAA ATPase VPS4; regulates OSH6 membrane association. VPS4 is required for membrane dissociation of OSH6.

The protein resides in the cytoplasm. The protein localises to the cell membrane. It localises to the endoplasmic reticulum membrane. The enzyme catalyses a 1,2-diacyl-sn-glycero-3-phospho-L-serine(in) = a 1,2-diacyl-sn-glycero-3-phospho-L-serine(out). In terms of biological role, lipid transport protein (LTP) involved in non-vesicular transfer of lipids between membranes. Functions in phosphoinositide-coupled directional transport of various lipids by carrying the lipid molecule in a hydrophobic pocket and transferring it between membranes through the cytosol. Involved in maintenance of intracellular sterol distribution and homeostasis. Catalyzes the lipid countertransport between the endoplasmic reticulum (ER) and the plasma membrane (PM). Specifically exchanges phosphatidylserine (PS) with phosphatidylinositol 4-phosphate (PI4P), delivering phosphatidylserine to the PM in exchange for PI4P, which is delivered to the ER-localized PI4P phosphatase SAC1 for degradation. Thus, by maintaining a PI4P gradient at the ER/PM interface, SAC1 drives PS transport. Binds phosphatidylserine and PI4P in a mutually exclusive manner. Also binds phosphatidic acid (PA). The sequence is that of Oxysterol-binding protein homolog 6 from Saccharomyces cerevisiae (strain ATCC 204508 / S288c) (Baker's yeast).